The sequence spans 1113 residues: Carbamoyl phosphate synthase arginine-specific large chain (1113 aa).

The carboxyphosphate synthetic domain stretch occupies residues 23-420 (QLIKGIDSVL…AFQKAFRQVD (398 aa)). 12 residues coordinate ATP: arginine 150, arginine 190, glycine 196, glycine 197, lysine 227, leucine 229, glutamate 234, glycine 260, isoleucine 261, histidine 262, glutamine 303, and glutamate 317. The 193-residue stretch at 154–346 (ARALKEINMP…LAYTAAKIAL (193 aa)) folds into the ATP-grasp 1 domain. Positions 303, 317, and 319 each coordinate Mg(2+). Mn(2+) contacts are provided by glutamine 303, glutamate 317, and asparagine 319. An oligomerization domain region spans residues 421–568 (PSLLGFQGSD…YVTYNAVKDD (148 aa)). Residues 569–955 (VTFGDNGIMV…SYWVALQGLM (387 aa)) are carbamoyl phosphate synthetic domain. The ATP-grasp 2 domain occupies 693–888 (STILDTLGLD…FVEIAVKAFL (196 aa)). Residues arginine 729, lysine 768, isoleucine 770, glutamate 775, glycine 800, valine 801, histidine 802, serine 803, glutamine 843, and glutamate 859 each contribute to the ATP site. Mg(2+)-binding residues include glutamine 843, glutamate 859, and asparagine 861. 3 residues coordinate Mn(2+): glutamine 843, glutamate 859, and asparagine 861. Residues 956–1097 (SFCVPLPPSG…EMRQSDGPET (142 aa)) form an allosteric domain region. In terms of domain architecture, MGS-like spans 957-1113 (FCVPLPPSGI…WREYLGFKPT (157 aa)).

It belongs to the CarB family. Heterodimer composed of 2 chains; the small (or glutamine) chain promotes the hydrolysis of glutamine to ammonia, which is used by the large (or ammonia) chain to synthesize carbamoyl phosphate. Requires Mg(2+) as cofactor. The cofactor is Mn(2+).

The protein localises to the cytoplasm. The enzyme catalyses hydrogencarbonate + L-glutamine + 2 ATP + H2O = carbamoyl phosphate + L-glutamate + 2 ADP + phosphate + 2 H(+). The catalysed reaction is hydrogencarbonate + NH4(+) + 2 ATP = carbamoyl phosphate + 2 ADP + phosphate + 2 H(+). Its pathway is amino-acid biosynthesis; L-arginine biosynthesis; carbamoyl phosphate from bicarbonate: step 1/1. In terms of biological role, large subunit of the arginine-specific carbamoyl phosphate synthase (CPSase). CPSase catalyzes the formation of carbamoyl phosphate from the ammonia moiety of glutamine, hydrogencarbonate, and phosphate donated by ATP, constituting the first step of 2 biosynthetic pathways, one leading to arginine and/or urea and the other to pyrimidine nucleotides. The large subunit (synthetase) binds the substrates ammonia (free or transferred from glutamine from the small subunit), hydrogencarbonate and ATP and carries out an ATP-coupled ligase reaction, activating hydrogencarbonate by forming carboxy phosphate which reacts with ammonia to form carbamoyl phosphate. This Eremothecium gossypii (strain ATCC 10895 / CBS 109.51 / FGSC 9923 / NRRL Y-1056) (Yeast) protein is Carbamoyl phosphate synthase arginine-specific large chain (CPA2).